Consider the following 211-residue polypeptide: NADH-quinone oxidoreductase subunit I (211 aa).

Residues 1–27 are disordered; that stretch reads MANTDRPALPHKRAVPPSRADSGPRRR. 2 4Fe-4S ferredoxin-type domains span residues 71-101 and 117-146; these read LNRY…VEGA and RVYQ…MTYD. [4Fe-4S] cluster contacts are provided by Cys81, Cys84, Cys87, Cys91, Cys126, Cys129, Cys132, and Cys136.

Belongs to the complex I 23 kDa subunit family. As to quaternary structure, NDH-1 is composed of 14 different subunits. Subunits NuoA, H, J, K, L, M, N constitute the membrane sector of the complex. [4Fe-4S] cluster serves as cofactor.

It localises to the cell membrane. It carries out the reaction a quinone + NADH + 5 H(+)(in) = a quinol + NAD(+) + 4 H(+)(out). Functionally, NDH-1 shuttles electrons from NADH, via FMN and iron-sulfur (Fe-S) centers, to quinones in the respiratory chain. The immediate electron acceptor for the enzyme in this species is believed to be menaquinone. Couples the redox reaction to proton translocation (for every two electrons transferred, four hydrogen ions are translocated across the cytoplasmic membrane), and thus conserves the redox energy in a proton gradient. This Mycobacterium tuberculosis (strain ATCC 25177 / H37Ra) protein is NADH-quinone oxidoreductase subunit I.